Reading from the N-terminus, the 431-residue chain is Reverse prenyltransferase criA (431 aa).

Dimethylallyl diphosphate is bound by residues Arg-104, Lys-193, Tyr-195, Lys-262, Tyr-264, Tyr-347, Tyr-412, and Tyr-416.

Belongs to the tryptophan dimethylallyltransferase family. As to quaternary structure, monomer.

The catalysed reaction is cyclo(L-tryptophyl-L-alanyl) + dimethylallyl diphosphate = preechinulin + diphosphate. The protein operates within secondary metabolite biosynthesis. Its pathway is alkaloid biosynthesis. Reverse prenyltransferase; part of the gene cluster that mediates the biosynthesis of echinulin family alkaloid. The pathway begins with the biosynthesis of the cyclic dipeptide cyclo-L-Trp-L-Ala (cyclo-TA) by the NRPS criC via condensation of L-alanine and L-tryptophan. The prenyltransferase criA then catalyzes the first prenylation step, a reverse prenylation reaction at C2, to yield preechinulin. Preechinulin is the substrate of the cytochrome P450 monooxygenase criE that catalyzes the formation of the double bond between C10 and C11 to produce neoechulin A. The unique prenyltransferase criF functions as a competitive enzyme with criE for preechinulin metabolization and uses preechinulin for effective regiospecific prenylations. Preechinulin is prenylated by criF at C5 or C7. C7-prenylation leads to accumulation of tardioxopiperazine B without further modification by criF. In contrast, the C5-prenylated tardioxopiperazine A can be prenylated again by criF, predominantly at C7 to form echinulin or less frequently at C4 to give variecolorin L. CriF also accepts neoechilunin A to produce varlecolorin G (prenylation at C5) or isoechinulin A (prenylation at C7). CriF further converts isoechinulin A into dehydroechinulin. Moreover, a yet unidentified enzyme can also convert neoechilunin A into neoechilunin B by introducing a double bond between positions C14 and C17 and thus provides a further substrate to criF for C5 and C7 prenylation. The sequence is that of Reverse prenyltransferase criA from Aspergillus cristatus (Chinese Fuzhuan brick tea-fermentation fungus).